A 250-amino-acid polypeptide reads, in one-letter code: V-type proton ATPase subunit D (250 aa).

It belongs to the V-ATPase D subunit family. In terms of assembly, V-ATPase is a heteromultimeric enzyme made up of two complexes: the ATP-hydrolytic V1 complex and the proton translocation V0 complex. The V1 complex consists of three catalytic AB heterodimers that form a heterohexamer, three peripheral stalks each consisting of EG heterodimers, one central rotor including subunits D and F, and the regulatory subunits C and H. The proton translocation complex V0 consists of the proton transport subunit a, a ring of proteolipid subunits c9c'', rotary subunit d, subunits e and f, and two accessory subunits ATP6AP1/Ac45 and ATP6AP2/PRR.

In terms of biological role, subunit of the V1 complex of vacuolar(H+)-ATPase (V-ATPase), a multisubunit enzyme composed of a peripheral complex (V1) that hydrolyzes ATP and a membrane integral complex (V0) that translocates protons. V-ATPase is responsible for acidifying and maintaining the pH of intracellular compartments and in some cell types, is targeted to the plasma membrane, where it is responsible for acidifying the extracellular environment. The chain is V-type proton ATPase subunit D (VATPD) from Suberites domuncula (Sponge).